The following is a 262-amino-acid chain: Acyl-[acyl-carrier-protein]--UDP-N-acetylglucosamine O-acyltransferase (262 aa).

The protein belongs to the transferase hexapeptide repeat family. LpxA subfamily. In terms of assembly, homotrimer.

It is found in the cytoplasm. It catalyses the reaction a (3R)-hydroxyacyl-[ACP] + UDP-N-acetyl-alpha-D-glucosamine = a UDP-3-O-[(3R)-3-hydroxyacyl]-N-acetyl-alpha-D-glucosamine + holo-[ACP]. The protein operates within glycolipid biosynthesis; lipid IV(A) biosynthesis; lipid IV(A) from (3R)-3-hydroxytetradecanoyl-[acyl-carrier-protein] and UDP-N-acetyl-alpha-D-glucosamine: step 1/6. Involved in the biosynthesis of lipid A, a phosphorylated glycolipid that anchors the lipopolysaccharide to the outer membrane of the cell. The sequence is that of Acyl-[acyl-carrier-protein]--UDP-N-acetylglucosamine O-acyltransferase from Pasteurella multocida (strain Pm70).